Reading from the N-terminus, the 118-residue chain is Cysteine--tRNA ligase (118 aa).

A Zn(2+)-binding site is contributed by C28. Positions 30–40 (PTVYNYIHIGN) match the 'HIGH' region motif.

Belongs to the class-I aminoacyl-tRNA synthetase family. As to quaternary structure, monomer. Requires Zn(2+) as cofactor.

It localises to the cytoplasm. It carries out the reaction tRNA(Cys) + L-cysteine + ATP = L-cysteinyl-tRNA(Cys) + AMP + diphosphate. This is Cysteine--tRNA ligase (cysS) from Staphylococcus xylosus.